We begin with the raw amino-acid sequence, 225 residues long: Small ribosomal subunit protein uS3 (225 aa).

The region spanning 38 to 106 (IRKFVQNRFN…PVNLNIIEVK (69 aa)) is the KH type-2 domain.

This sequence belongs to the universal ribosomal protein uS3 family. In terms of assembly, part of the 30S ribosomal subunit. Forms a tight complex with proteins S10 and S14.

Its function is as follows. Binds the lower part of the 30S subunit head. Binds mRNA in the 70S ribosome, positioning it for translation. The sequence is that of Small ribosomal subunit protein uS3 from Leptospira interrogans serogroup Icterohaemorrhagiae serovar copenhageni (strain Fiocruz L1-130).